We begin with the raw amino-acid sequence, 363 residues long: Nucleoporin SEH1 (363 aa).

WD repeat units lie at residues 15–54, 60–101, 108–149, 158–206, 223–264, and 287–326; these read AHRD…NWRR, CHGG…SEKD, QWIR…RIYE, RWNL…VIYE, DLPC…SAIL, and GDHR…QWVK.

This sequence belongs to the WD repeat SEC13 family. In terms of assembly, component of the nuclear pore complex (NPC). Probably part of the GATOR complex.

Its subcellular location is the nucleus. The protein resides in the nuclear pore complex. It localises to the lysosome membrane. The protein localises to the nucleus envelope. Functionally, probable component of the nuclear pore complex (NPC) which is involved in the trafficking of macromolecules between the cytoplasm and nucleus. In terms of biological role, as a component of the GATOR complex may function in the amino acid-sensing branch of the TORC1 signaling pathway. In Caenorhabditis elegans, this protein is Nucleoporin SEH1.